Reading from the N-terminus, the 247-residue chain is Carboxy-S-adenosyl-L-methionine synthase (247 aa).

Residues Tyr-39, 64–66, 89–90, 117–118, Asn-132, and Arg-199 each bind S-adenosyl-L-methionine; these read GCS, DN, and DI.

Belongs to the class I-like SAM-binding methyltransferase superfamily. Cx-SAM synthase family. As to quaternary structure, homodimer.

The catalysed reaction is prephenate + S-adenosyl-L-methionine = carboxy-S-adenosyl-L-methionine + 3-phenylpyruvate + H2O. In terms of biological role, catalyzes the conversion of S-adenosyl-L-methionine (SAM) to carboxy-S-adenosyl-L-methionine (Cx-SAM). The sequence is that of Carboxy-S-adenosyl-L-methionine synthase from Escherichia coli (strain K12 / MC4100 / BW2952).